Consider the following 345-residue polypeptide: Annexin A9 (345 aa).

4 Annexin repeats span residues 41–112 (FSVD…ALLQ), 113–184 (PAAQ…ALSK), 197–266 (NLEE…SLAS), and 270–341 (NTAL…ALCR).

The protein belongs to the annexin family. As to quaternary structure, homodimer.

May act as a low affinity receptor for acetylcholine. The sequence is that of Annexin A9 (Anxa9) from Mus musculus (Mouse).